Consider the following 372-residue polypeptide: Cytochrome b (372 aa).

The next 4 membrane-spanning stretches (helical) occupy residues 25-45 (FGSMLLTCLMLQILTGFFLAI), 69-90 (WIMQNLHAISASLFFICVYIHI), 105-125 (WLSGMTLLVFLMATAFFGYVL), and 170-190 (FFALHFILPFVIISLSSIHIM). Residues histidine 75 and histidine 89 each coordinate heme b. Heme b contacts are provided by histidine 174 and histidine 188. Histidine 193 contributes to the a ubiquinone binding site. The next 4 helical transmembrane spans lie at 218-238 (YKDMLMITTMITLLFLILSFS), 280-300 (LGGTLALLLSVVILTTAPFTH), 312-332 (LSQILFWTFIATFITITWTAS), and 339-358 (FILISQTTSIFYFSFFIMAP).

The protein belongs to the cytochrome b family. In terms of assembly, the cytochrome bc1 complex contains 3 respiratory subunits (MT-CYB, CYC1 and UQCRFS1), 2 core proteins (UQCRC1 and UQCRC2) and probably 6 low-molecular weight proteins. Requires heme b as cofactor.

The protein localises to the mitochondrion inner membrane. Component of the ubiquinol-cytochrome c reductase complex (complex III or cytochrome b-c1 complex) that is part of the mitochondrial respiratory chain. The b-c1 complex mediates electron transfer from ubiquinol to cytochrome c. Contributes to the generation of a proton gradient across the mitochondrial membrane that is then used for ATP synthesis. The chain is Cytochrome b (MT-CYB) from Hemachatus haemachatus (Rinkhals).